The following is a 995-amino-acid chain: Bifunctional glutamine synthetase adenylyltransferase/adenylyl-removing enzyme (995 aa).

The adenylyl removase stretch occupies residues 1-474 (MNHSAPGNAD…HYEKLFEGDD (474 aa)). 2 glnE regions span residues 122 to 333 (RRMK…MKRQ) and 637 to 853 (SYEE…MRRA). Residues 479-995 (AKLPALDYSA…LEGTSPASAR (517 aa)) form an adenylyl transferase region.

Belongs to the GlnE family. It depends on Mg(2+) as a cofactor.

The enzyme catalyses [glutamine synthetase]-O(4)-(5'-adenylyl)-L-tyrosine + phosphate = [glutamine synthetase]-L-tyrosine + ADP. The catalysed reaction is [glutamine synthetase]-L-tyrosine + ATP = [glutamine synthetase]-O(4)-(5'-adenylyl)-L-tyrosine + diphosphate. In terms of biological role, involved in the regulation of glutamine synthetase GlnA, a key enzyme in the process to assimilate ammonia. When cellular nitrogen levels are high, the C-terminal adenylyl transferase (AT) inactivates GlnA by covalent transfer of an adenylyl group from ATP to specific tyrosine residue of GlnA, thus reducing its activity. Conversely, when nitrogen levels are low, the N-terminal adenylyl removase (AR) activates GlnA by removing the adenylyl group by phosphorolysis, increasing its activity. The regulatory region of GlnE binds the signal transduction protein PII (GlnB) which indicates the nitrogen status of the cell. The protein is Bifunctional glutamine synthetase adenylyltransferase/adenylyl-removing enzyme of Bradyrhizobium diazoefficiens (strain JCM 10833 / BCRC 13528 / IAM 13628 / NBRC 14792 / USDA 110).